Here is a 406-residue protein sequence, read N- to C-terminus: Peptidase T (406 aa).

Residue His-82 coordinates Zn(2+). The active site involves Asp-84. Asp-142 serves as a coordination point for Zn(2+). Glu-176 acts as the Proton acceptor in catalysis. Zn(2+) contacts are provided by Glu-177, Asp-199, and His-381.

It belongs to the peptidase M20B family. Zn(2+) serves as cofactor.

It is found in the cytoplasm. It carries out the reaction Release of the N-terminal residue from a tripeptide.. Cleaves the N-terminal amino acid of tripeptides. This Streptococcus agalactiae serotype Ia (strain ATCC 27591 / A909 / CDC SS700) protein is Peptidase T.